The primary structure comprises 448 residues: MTIFQFPQDFMWGTATAAYQIEGAYQEDGRGLSIWDTFAHTPGKVFNGDNGNVACDSYHRYEEDIRLMKELGIRTYRFSVSWPRIFPNGDGEVNQEGLDYYHRVVDLLNDNGIEPFCTLYHWDLPQALQDAGGWGNRRTIQAFVQFAETMFREFHGKIQHWLTFNEPWCIAFLSNMLGVHAPGLTNLQTAIDVGHHLLVAHGLSVRRFRELGTSGQIGIAPNVSWAVPYSTSEEDKAACARTISLHSDWFLQPIYQGSYPQFLVDWFAEQGATVPIQDGDMDIIGEPIDMIGINYYSMSVNRFNPEAGFLQSEEINMGLPVTDIGWPVESRGLYEVLHYLQKYGNIDIYITENGACINDEVVNGKVQDDRRISYMQQHLVQVHRTIHDGLHVKGYMAWSLLDNFEWAEGYNMRFGMIHVDFRTQVRTPKESYYWYRNVVSNNWLETRR.

Glu166 (proton donor) is an active-site residue. Glu352 acts as the Nucleophile in catalysis.

The protein belongs to the glycosyl hydrolase 1 family. As to quaternary structure, homooctamer.

It catalyses the reaction Hydrolysis of terminal, non-reducing beta-D-glucosyl residues with release of beta-D-glucose.. Functionally, bglA is intracellular and cleaves cellobiose probably through inorganic phosphate mediated hydrolysis. The chain is Beta-glucosidase A (bglA) from Paenibacillus polymyxa (Bacillus polymyxa).